Consider the following 542-residue polypeptide: CTP synthase (542 aa).

Residues 1–265 (MARYVFITGG…DNEVLAAFGI (265 aa)) form an amidoligase domain region. Residue serine 13 participates in CTP binding. Residue serine 13 participates in UTP binding. Residues 14-19 (SLGKGI) and aspartate 71 each bind ATP. Aspartate 71 and glutamate 139 together coordinate Mg(2+). Residues 146–148 (DIE), 186–191 (KTKPTQ), and lysine 222 each bind CTP. Residues 186–191 (KTKPTQ) and lysine 222 each bind UTP. A Glutamine amidotransferase type-1 domain is found at 291 to 541 (TIAIVGKYTG…IEAALEQSRL (251 aa)). Glycine 353 contacts L-glutamine. Cysteine 380 (nucleophile; for glutamine hydrolysis) is an active-site residue. L-glutamine-binding positions include 381 to 384 (FGMQ), glutamate 404, and arginine 469. Active-site residues include histidine 514 and glutamate 516.

This sequence belongs to the CTP synthase family. As to quaternary structure, homotetramer.

It carries out the reaction UTP + L-glutamine + ATP + H2O = CTP + L-glutamate + ADP + phosphate + 2 H(+). The catalysed reaction is L-glutamine + H2O = L-glutamate + NH4(+). The enzyme catalyses UTP + NH4(+) + ATP = CTP + ADP + phosphate + 2 H(+). Its pathway is pyrimidine metabolism; CTP biosynthesis via de novo pathway; CTP from UDP: step 2/2. Its activity is regulated as follows. Allosterically activated by GTP, when glutamine is the substrate; GTP has no effect on the reaction when ammonia is the substrate. The allosteric effector GTP functions by stabilizing the protein conformation that binds the tetrahedral intermediate(s) formed during glutamine hydrolysis. Inhibited by the product CTP, via allosteric rather than competitive inhibition. In terms of biological role, catalyzes the ATP-dependent amination of UTP to CTP with either L-glutamine or ammonia as the source of nitrogen. Regulates intracellular CTP levels through interactions with the four ribonucleotide triphosphates. The protein is CTP synthase of Rhizobium meliloti (strain 1021) (Ensifer meliloti).